A 625-amino-acid chain; its full sequence is BTB/POZ domain-containing protein At5g48130 (625 aa).

Positions 41–105 constitute a BTB domain; the sequence is ASVHVRVCNK…IYGCPTLIHP (65 aa). An NPH3 domain is found at 217–469; it reads DTWIKDLTDL…VQALFIQQLN (253 aa). A compositionally biased stretch (polar residues) spans 494–507; sequence VPSSRPLTSQQSPC. A disordered region spans residues 494 to 513; sequence VPSSRPLTSQQSPCTDDETG.

It belongs to the NPH3 family.

It functions in the pathway protein modification; protein ubiquitination. In terms of biological role, may act as a substrate-specific adapter of an E3 ubiquitin-protein ligase complex (CUL3-RBX1-BTB) which mediates the ubiquitination and subsequent proteasomal degradation of target proteins. The polypeptide is BTB/POZ domain-containing protein At5g48130 (Arabidopsis thaliana (Mouse-ear cress)).